We begin with the raw amino-acid sequence, 65 residues long: Orally active insecticidal peptide-3 (65 aa).

Positions 1–21 (MKTSVLFAILGLALLFCLSFG) are cleaved as a signal peptide. Residues 22–29 (VELEETGR) constitute a propeptide that is removed on maturation. Cystine bridges form between Cys31–Cys46, Cys38–Cys51, and Cys45–Cys58. Pro62 carries the post-translational modification Proline amide.

Belongs to the neurotoxin 10 (Hwtx-1) family. 46 (Jztx-7/10/12) subfamily. As to expression, expressed by the venom gland.

The protein resides in the secreted. In terms of biological role, probable ion channel inhibitor. Shows insecticidal activity when injected into mealworms. This is Orally active insecticidal peptide-3 from Selenotypus plumipes (Australian featherleg tarantula).